We begin with the raw amino-acid sequence, 572 residues long: Squalene synthase (572 aa).

The next 2 helical transmembrane spans lie at 316–336 (SVFNFCAIPQVMAIATLELMF) and 492–512 (FFLIILVGMVTFMGIVALITW).

The protein belongs to the phytoene/squalene synthase family. Monomer. It depends on Mg(2+) as a cofactor.

The protein resides in the endoplasmic reticulum membrane. The enzyme catalyses 2 (2E,6E)-farnesyl diphosphate + NADPH + H(+) = squalene + 2 diphosphate + NADP(+). It carries out the reaction 2 (2E,6E)-farnesyl diphosphate + NADH + H(+) = squalene + 2 diphosphate + NAD(+). Its pathway is terpene metabolism; lanosterol biosynthesis; lanosterol from farnesyl diphosphate: step 1/3. In terms of biological role, catalyzes the condensation of 2 two farnesyl pyrophosphate moieties to form squalene. It is the first committed enzyme of the sterol biosynthesis pathway. Required for the biosynthesis of ergosterol. The polypeptide is Squalene synthase (ERG9) (Mycosarcoma maydis (Corn smut fungus)).